We begin with the raw amino-acid sequence, 65 residues long: Conotoxin Lp5.1 (65 aa).

Residues 1–22 form the signal peptide; that stretch reads MRCVPVFIILLLLIPSAPSVDA. A propeptide spanning residues 23 to 50 is cleaved from the precursor; the sequence is QRKTKDDVPLASFHDNAKRTLKRLWNKR.

The protein belongs to the conotoxin T superfamily. Post-translationally, contains 2 disulfide bonds that can be either 'C1-C3, C2-C4' or 'C1-C4, C2-C3', since these disulfide connectivities have been observed for conotoxins with cysteine framework V (for examples, see AC P0DQQ7 and AC P81755). Expressed by the venom duct.

The protein resides in the secreted. This chain is Conotoxin Lp5.1, found in Conus leopardus (Leopard cone).